Reading from the N-terminus, the 283-residue chain is Apidaecins type 73 (283 aa).

A signal peptide spans 1–18 (KNFALAILVVTFVVAVFG). 9 propeptides span residues 19-41 (NTNL…EAEP), 62-69 (EAEPEAEP), 90-97 (EAELEAEP), 118-125 (EAEPEAEP), 146-153 (EAELEAEP), 174-181 (EAEPEAEP), 202-209 (EAEPEAEP), 230-237 (EAEPEAEP), and 258-265 (EAKPEAKP). The tract at residues 19–283 (NTNLDPPTRP…PQPRPPHPRI (265 aa)) is disordered. Residues 273 to 283 (IPQPRPPHPRI) are compositionally biased toward pro residues.

Belongs to the apidaecin family.

It localises to the secreted. Apidaecins have bactericidal activity; predominantly against Gram-negative bacteria. They seem to interfere with cell propagation. The polypeptide is Apidaecins type 73 (APID73) (Apis mellifera (Honeybee)).